A 23-amino-acid polypeptide reads, in one-letter code: Prolamin alpha-3 (23 aa).

The polypeptide is Prolamin alpha-3 (Dactylis glomerata (Orchard grass)).